A 180-amino-acid polypeptide reads, in one-letter code: Bifunctional protein PyrR (180 aa).

A PRPP-binding motif is present at residues 101 to 113 (VILVDDVLYTGRT).

It belongs to the purine/pyrimidine phosphoribosyltransferase family. PyrR subfamily. In terms of assembly, homodimer and homohexamer; in equilibrium.

The enzyme catalyses UMP + diphosphate = 5-phospho-alpha-D-ribose 1-diphosphate + uracil. Its function is as follows. Regulates transcriptional attenuation of the pyrimidine nucleotide (pyr) operon by binding in a uridine-dependent manner to specific sites on pyr mRNA. This disrupts an antiterminator hairpin in the RNA and favors formation of a downstream transcription terminator, leading to a reduced expression of downstream genes. Also displays a weak uracil phosphoribosyltransferase activity which is not physiologically significant. The chain is Bifunctional protein PyrR from Bacillus thuringiensis subsp. konkukian (strain 97-27).